Here is a 101-residue protein sequence, read N- to C-terminus: Antiviral protein CAP (101 aa).

Has antiviral activity against tobacco mosaic virus and antitumor activity. The sequence is that of Antiviral protein CAP from Coprinus comatus (Shaggy mane).